The chain runs to 391 residues: Probable tRNA sulfurtransferase (391 aa).

A THUMP domain is found at 60–167 (DEIIDHIKKV…KDNCYVYTDR (108 aa)). ATP is bound by residues 185 to 186 (LL), 210 to 211 (HF), Arg-267, Gly-289, and Gln-298.

Belongs to the ThiI family.

Its subcellular location is the cytoplasm. It carries out the reaction [ThiI sulfur-carrier protein]-S-sulfanyl-L-cysteine + a uridine in tRNA + 2 reduced [2Fe-2S]-[ferredoxin] + ATP + H(+) = [ThiI sulfur-carrier protein]-L-cysteine + a 4-thiouridine in tRNA + 2 oxidized [2Fe-2S]-[ferredoxin] + AMP + diphosphate. The catalysed reaction is [ThiS sulfur-carrier protein]-C-terminal Gly-Gly-AMP + S-sulfanyl-L-cysteinyl-[cysteine desulfurase] + AH2 = [ThiS sulfur-carrier protein]-C-terminal-Gly-aminoethanethioate + L-cysteinyl-[cysteine desulfurase] + A + AMP + 2 H(+). It functions in the pathway cofactor biosynthesis; thiamine diphosphate biosynthesis. Functionally, catalyzes the ATP-dependent transfer of a sulfur to tRNA to produce 4-thiouridine in position 8 of tRNAs, which functions as a near-UV photosensor. Also catalyzes the transfer of sulfur to the sulfur carrier protein ThiS, forming ThiS-thiocarboxylate. This is a step in the synthesis of thiazole, in the thiamine biosynthesis pathway. The sulfur is donated as persulfide by IscS. The sequence is that of Probable tRNA sulfurtransferase from Finegoldia magna (strain ATCC 29328 / DSM 20472 / WAL 2508) (Peptostreptococcus magnus).